Consider the following 104-residue polypeptide: Urease subunit beta (104 aa).

It belongs to the urease beta subunit family. As to quaternary structure, heterotrimer of UreA (gamma), UreB (beta) and UreC (alpha) subunits. Three heterotrimers associate to form the active enzyme.

It is found in the cytoplasm. The enzyme catalyses urea + 2 H2O + H(+) = hydrogencarbonate + 2 NH4(+). It functions in the pathway nitrogen metabolism; urea degradation; CO(2) and NH(3) from urea (urease route): step 1/1. This is Urease subunit beta from Mycolicibacterium vanbaalenii (strain DSM 7251 / JCM 13017 / BCRC 16820 / KCTC 9966 / NRRL B-24157 / PYR-1) (Mycobacterium vanbaalenii).